We begin with the raw amino-acid sequence, 76 residues long: Conotoxin PnMKLT1-1111 (76 aa).

A signal peptide spans 1–22 (MKLTCMMIVAVLFLTAWTVVTA). A propeptide spanning residues 23-50 (VPHSNKRLANLYLKARHEMKNPEASNVD) is cleaved from the precursor. Disulfide bonds link C53–C67, C60–C71, and C66–C75.

Belongs to the conotoxin O1 superfamily. As to expression, expressed by the venom duct.

The protein localises to the secreted. The chain is Conotoxin PnMKLT1-1111 from Conus pennaceus (Feathered cone).